We begin with the raw amino-acid sequence, 499 residues long: L-asparagine permease (499 aa).

12 helical membrane passes run Q34–A54, M58–L78, V109–V129, V146–F166, F171–F191, L219–V239, I264–Y284, L298–S318, Y353–V373, F378–V398, A422–F442, and T448–V468.

Belongs to the amino acid-polyamine-organocation (APC) superfamily. Amino acid transporter (AAT) (TC 2.A.3.1) family.

The protein resides in the cell inner membrane. The chain is L-asparagine permease (ansP) from Escherichia coli (strain K12).